A 142-amino-acid chain; its full sequence is Large ribosomal subunit protein uL13 (142 aa).

This sequence belongs to the universal ribosomal protein uL13 family. As to quaternary structure, part of the 50S ribosomal subunit.

In terms of biological role, this protein is one of the early assembly proteins of the 50S ribosomal subunit, although it is not seen to bind rRNA by itself. It is important during the early stages of 50S assembly. The sequence is that of Large ribosomal subunit protein uL13 from Edwardsiella ictaluri (strain 93-146).